Here is a 338-residue protein sequence, read N- to C-terminus: Holliday junction branch migration complex subunit RuvB (338 aa).

The tract at residues 1–181 (MERAITPEKR…FGVISRLEFY (181 aa)) is large ATPase domain (RuvB-L). ATP is bound by residues Leu20, Arg21, Gly62, Lys65, Thr66, Thr67, 128-130 (EDF), Arg171, Tyr181, and Arg218. A Mg(2+)-binding site is contributed by Thr66. A small ATPAse domain (RuvB-S) region spans residues 182-252 (THDELAFIVT…VVQETLRLLE (71 aa)). Positions 255–338 (EMGFDQMDRM…TPERPQGSLF (84 aa)) are head domain (RuvB-H). DNA-binding residues include Arg310 and Arg315.

The protein belongs to the RuvB family. As to quaternary structure, homohexamer. Forms an RuvA(8)-RuvB(12)-Holliday junction (HJ) complex. HJ DNA is sandwiched between 2 RuvA tetramers; dsDNA enters through RuvA and exits via RuvB. An RuvB hexamer assembles on each DNA strand where it exits the tetramer. Each RuvB hexamer is contacted by two RuvA subunits (via domain III) on 2 adjacent RuvB subunits; this complex drives branch migration. In the full resolvosome a probable DNA-RuvA(4)-RuvB(12)-RuvC(2) complex forms which resolves the HJ.

It localises to the cytoplasm. It catalyses the reaction ATP + H2O = ADP + phosphate + H(+). Functionally, the RuvA-RuvB-RuvC complex processes Holliday junction (HJ) DNA during genetic recombination and DNA repair, while the RuvA-RuvB complex plays an important role in the rescue of blocked DNA replication forks via replication fork reversal (RFR). RuvA specifically binds to HJ cruciform DNA, conferring on it an open structure. The RuvB hexamer acts as an ATP-dependent pump, pulling dsDNA into and through the RuvAB complex. RuvB forms 2 homohexamers on either side of HJ DNA bound by 1 or 2 RuvA tetramers; 4 subunits per hexamer contact DNA at a time. Coordinated motions by a converter formed by DNA-disengaged RuvB subunits stimulates ATP hydrolysis and nucleotide exchange. Immobilization of the converter enables RuvB to convert the ATP-contained energy into a lever motion, pulling 2 nucleotides of DNA out of the RuvA tetramer per ATP hydrolyzed, thus driving DNA branch migration. The RuvB motors rotate together with the DNA substrate, which together with the progressing nucleotide cycle form the mechanistic basis for DNA recombination by continuous HJ branch migration. Branch migration allows RuvC to scan DNA until it finds its consensus sequence, where it cleaves and resolves cruciform DNA. The polypeptide is Holliday junction branch migration complex subunit RuvB (Trichlorobacter lovleyi (strain ATCC BAA-1151 / DSM 17278 / SZ) (Geobacter lovleyi)).